A 2214-amino-acid polypeptide reads, in one-letter code: Non-reducing polyketide synthase dpmpA (2214 aa).

Residues 75–178 (EWIRTGDSHV…LAVCAGAWKD (104 aa)) are N-terminal acylcarrier protein transacylase domain (SAT). The region spanning 372-784 (DESIAIVGAS…GNNTAMIVCQ (413 aa)) is the Ketosynthase family 3 (KS3) domain. Residues Cys532, His667, and His707 each act as for beta-ketoacyl synthase activity in the active site. The segment at 888-1184 (VFAGQTGHRP…AFLSARLGSP (297 aa)) is malonyl-CoA:ACP transacylase (MAT) domain. Residue Ser974 is the For acyl/malonyl transferase activity of the active site. The segment at 1255–1389 (PQLVSVVRSS…GIIKSQEQDR (135 aa)) is N-terminal hotdog fold. The region spanning 1255–1566 (PQLVSVVRSS…FSKVPVRSLQ (312 aa)) is the PKS/mFAS DH domain. The tract at residues 1265–1560 (GGADPEAAEF…AILGARFSKV (296 aa)) is product template (PT) domain. The segment at 1416 to 1566 (GASVVQGAFV…FSKVPVRSLQ (151 aa)) is C-terminal hotdog fold. 2 Carrier domains span residues 1620–1695 (NEVK…HSRL) and 1722–1802 (KAST…SGAD). An O-(pantetheine 4'-phosphoryl)serine modification is found at Ser1654. A disordered region spans residues 1698–1728 (VPQLSPHDTDRSSDLSAGQPPSTPKASTQEQ). The segment covering 1711–1726 (DLSAGQPPSTPKASTQ) has biased composition (polar residues). Ser1762 carries the post-translational modification O-(pantetheine 4'-phosphoryl)serine. The segment at 1805–1827 (GFPRTSDNRRSEEGSVGHVGPEK) is disordered. Basic and acidic residues predominate over residues 1810-1827 (SDNRRSEEGSVGHVGPEK). The interval 1958–2210 (FPAYRPDHRL…SREADLFRWI (253 aa)) is methyltransferase (CMeT) domain.

It functions in the pathway secondary metabolite biosynthesis; terpenoid biosynthesis. Its function is as follows. Non-reducing polyketide synthase; part of the gene cluster that mediates the biosynthesis of diterpenoid pyrones. The first step of the pathway is the synthesis of the alpha-pyrone moiety by the polyketide synthase dpmpA via condensation of one acetyl-CoA starter unit with 3 malonyl-CoA units and 2 methylations. The alpha-pyrone is then combined with geranylgeranyl pyrophosphate (GGPP) formed by the GGPP synthase dpmpD through the action of the prenyltransferase dpmpC to yield a linear alpha-pyrone diterpenoid. Subsequent steps in the diterpenoid pyrone biosynthetic pathway involve the decalin core formation, which is initiated by the epoxidation of the C10-C11 olefin by the FAD-dependent oxidoreductase dpmpE, and is followed by a cyclization cascade catalyzed by the terpene cyclase dpmpB. The short chain dehydrogenase/reductase dpmpG then oxidizes the 8S hydroxy group to a ketone and the short chain dehydrogenase/reductase dpmpH reduces the ketone to the 8R hydroxy group to yield higginsianin B. Higginsianin B is further methylated by the methyltransferase dpmpI to produce the intermediate named FDDP B. The cytochrome P450 monooxygenase dpmpJ then oxidizes the C-26 methyl to primary alcohol, producing the final diterpenoid pyrone with a C-26 primary alcohol on the gamma-pyrone moiety named FDDP C. In Macrophomina phaseolina (strain MS6) (Charcoal rot fungus), this protein is Non-reducing polyketide synthase dpmpA.